The chain runs to 279 residues: Nucleotide-binding protein THA_1518 (279 aa).

9-16 (GLSGAGKS) contributes to the ATP binding site. GTP is bound at residue 57-60 (DARS).

It belongs to the RapZ-like family.

Functionally, displays ATPase and GTPase activities. This Thermosipho africanus (strain TCF52B) protein is Nucleotide-binding protein THA_1518.